A 219-amino-acid polypeptide reads, in one-letter code: Large ribosomal subunit protein uL29m (219 aa).

The disordered stretch occupies residues 77–97 (ASKYPLPKPVSPEKLEKREST). Residues 87-97 (SPEKLEKREST) are compositionally biased toward basic and acidic residues.

The protein belongs to the universal ribosomal protein uL29 family. As to quaternary structure, component of the mitochondrial large ribosomal subunit. Mature mitochondrial ribosomes consist of a small (37S) and a large (54S) subunit. The 37S subunit contains at least 33 different proteins and 1 molecule of RNA (15S). The 54S subunit contains at least 45 different proteins and 1 molecule of RNA (21S).

The protein resides in the mitochondrion. This Emericella nidulans (strain FGSC A4 / ATCC 38163 / CBS 112.46 / NRRL 194 / M139) (Aspergillus nidulans) protein is Large ribosomal subunit protein uL29m (mrpl4).